The following is a 344-amino-acid chain: Dihydroorotase (344 aa).

Zn(2+) is bound by residues H13 and H15. Substrate-binding positions include 15 to 17 and N41; that span reads HLR. 3 residues coordinate Zn(2+): K99, H136, and H174. K99 bears the N6-carboxylysine mark. H136 is a substrate binding site. L219 contributes to the substrate binding site. D247 provides a ligand contact to Zn(2+). Residue D247 is part of the active site. Residues H251 and A263 each coordinate substrate.

Belongs to the metallo-dependent hydrolases superfamily. DHOase family. Class II DHOase subfamily. In terms of assembly, homodimer. The cofactor is Zn(2+).

The catalysed reaction is (S)-dihydroorotate + H2O = N-carbamoyl-L-aspartate + H(+). It participates in pyrimidine metabolism; UMP biosynthesis via de novo pathway; (S)-dihydroorotate from bicarbonate: step 3/3. Catalyzes the reversible cyclization of carbamoyl aspartate to dihydroorotate. In Shewanella denitrificans (strain OS217 / ATCC BAA-1090 / DSM 15013), this protein is Dihydroorotase.